The sequence spans 612 residues: Dihydroxy-acid dehydratase (612 aa).

Aspartate 81 is a Mg(2+) binding site. [2Fe-2S] cluster is bound at residue cysteine 122. Mg(2+)-binding residues include aspartate 123 and lysine 124. Lysine 124 is subject to N6-carboxylysine. Cysteine 196 lines the [2Fe-2S] cluster pocket. Glutamate 492 contacts Mg(2+). The active-site Proton acceptor is serine 518.

It belongs to the IlvD/Edd family. As to quaternary structure, homodimer. [2Fe-2S] cluster serves as cofactor. It depends on Mg(2+) as a cofactor.

The catalysed reaction is (2R)-2,3-dihydroxy-3-methylbutanoate = 3-methyl-2-oxobutanoate + H2O. It carries out the reaction (2R,3R)-2,3-dihydroxy-3-methylpentanoate = (S)-3-methyl-2-oxopentanoate + H2O. It participates in amino-acid biosynthesis; L-isoleucine biosynthesis; L-isoleucine from 2-oxobutanoate: step 3/4. Its pathway is amino-acid biosynthesis; L-valine biosynthesis; L-valine from pyruvate: step 3/4. Its function is as follows. Functions in the biosynthesis of branched-chain amino acids. Catalyzes the dehydration of (2R,3R)-2,3-dihydroxy-3-methylpentanoate (2,3-dihydroxy-3-methylvalerate) into 2-oxo-3-methylpentanoate (2-oxo-3-methylvalerate) and of (2R)-2,3-dihydroxy-3-methylbutanoate (2,3-dihydroxyisovalerate) into 2-oxo-3-methylbutanoate (2-oxoisovalerate), the penultimate precursor to L-isoleucine and L-valine, respectively. The chain is Dihydroxy-acid dehydratase from Paracoccus denitrificans (strain Pd 1222).